We begin with the raw amino-acid sequence, 204 residues long: ATP phosphoribosyltransferase (204 aa).

It belongs to the ATP phosphoribosyltransferase family. Short subfamily. As to quaternary structure, heteromultimer composed of HisG and HisZ subunits.

It is found in the cytoplasm. It catalyses the reaction 1-(5-phospho-beta-D-ribosyl)-ATP + diphosphate = 5-phospho-alpha-D-ribose 1-diphosphate + ATP. It participates in amino-acid biosynthesis; L-histidine biosynthesis; L-histidine from 5-phospho-alpha-D-ribose 1-diphosphate: step 1/9. Functionally, catalyzes the condensation of ATP and 5-phosphoribose 1-diphosphate to form N'-(5'-phosphoribosyl)-ATP (PR-ATP). Has a crucial role in the pathway because the rate of histidine biosynthesis seems to be controlled primarily by regulation of HisG enzymatic activity. The protein is ATP phosphoribosyltransferase of Staphylococcus epidermidis (strain ATCC 35984 / DSM 28319 / BCRC 17069 / CCUG 31568 / BM 3577 / RP62A).